The chain runs to 798 residues: General transcription and DNA repair factor IIH helicase/translocase subunit XPB (798 aa).

2 disordered regions span residues 1–62 and 235–254; these read MGPP…EQIN and PPGATDKPTPDPAAAAGADG. The short motif at 6–22 is the Nuclear localization signal element; it reads KSRKDRSGGDKFGKKRR. The segment covering 10–25 has biased composition (basic and acidic residues); that stretch reads DRSGGDKFGKKRRAED. Acidic residues predominate over residues 33–42; sequence DDNDSLDATE. The Helicase ATP-binding domain maps to 343-504; sequence MFGNGRARSG…DLNFLIGPKL (162 aa). 360–367 is a binding site for ATP; the sequence is AGKSLVGV. A DEVH box motif is present at residues 457–460; sequence DEVH. The Helicase C-terminal domain maps to 558 to 713; it reads RSCQFLIKYH…KVITHLKGMD (156 aa). A disordered region spans residues 746–765; it reads LPGEPGYRPSGSGGAVRRVG.

Belongs to the helicase family. RAD25/XPB subfamily. As to quaternary structure, component of the 7-subunit TFIIH core complex composed of haywire/XPB/ERCC3, XPD/ERCC2, GTF2H1, GTF2H2, GTF2H3, GTF2H4 and GTF2H5, which is active in NER. The core complex associates with the 3-subunit CDK-activating kinase (CAK) module composed of CCNH/cyclin H, CDK7 and MNAT1 to form the 10-subunit holoenzyme (holo-TFIIH) active in transcription. Interacts with PUF60. Interacts with ATF7IP. Interacts with Epstein-Barr virus EBNA2.

The protein localises to the nucleus. It carries out the reaction Couples ATP hydrolysis with the unwinding of duplex DNA by translocating in the 3'-5' direction.. The catalysed reaction is ATP + H2O = ADP + phosphate + H(+). ATP-dependent 3'-5' DNA helicase/translocase; binds dsDNA rather than ssDNA, unzipping it in a translocase rather than classical helicase activity. Component of the general transcription and DNA repair factor IIH (TFIIH) core complex. When complexed to CDK-activating kinase (CAK), involved in RNA transcription by RNA polymerase II. The ATPase activity of XPB/ERCC3, but not its helicase activity, is required for DNA opening; it may wrap around the damaged DNA wedging it open, causing localized melting and twisting that allows XPD/ERCC2 helicase to anchor. The ATP-dependent helicase activity of XPB/ERCC3 may be required for promoter escape. Also involved in transcription-coupled nucleotide excision repair (NER) of damaged DNA. In NER, TFIIH acts by opening DNA around the lesion to allow the excision of the damaged oligonucleotide and its replacement by a new DNA fragment. The structure of the TFIIH transcription complex differs from the NER-TFIIH complex; large movements by XPD/ERCC2 and XPB/ERCC3 are stabilized by XPA. This chain is General transcription and DNA repair factor IIH helicase/translocase subunit XPB (hay), found in Drosophila melanogaster (Fruit fly).